A 431-amino-acid polypeptide reads, in one-letter code: Tol-Pal system protein TolB (431 aa).

Residues 1-26 (MRLMTKLGFRALVASCLIAAGAAANA) form the signal peptide. The segment at 411-431 (PQILSVQGGSVREPSWGPFMQ) is disordered.

The protein belongs to the TolB family. In terms of assembly, the Tol-Pal system is composed of five core proteins: the inner membrane proteins TolA, TolQ and TolR, the periplasmic protein TolB and the outer membrane protein Pal. They form a network linking the inner and outer membranes and the peptidoglycan layer.

The protein resides in the periplasm. Functionally, part of the Tol-Pal system, which plays a role in outer membrane invagination during cell division and is important for maintaining outer membrane integrity. This Burkholderia ambifaria (strain ATCC BAA-244 / DSM 16087 / CCUG 44356 / LMG 19182 / AMMD) (Burkholderia cepacia (strain AMMD)) protein is Tol-Pal system protein TolB.